The sequence spans 285 residues: Pantothenate synthetase (285 aa).

30 to 37 contributes to the ATP binding site; sequence MGNLHDGH. His-37 acts as the Proton donor in catalysis. Position 61 (Gln-61) interacts with (R)-pantoate. Residue Gln-61 participates in beta-alanine binding. 149 to 152 contacts ATP; the sequence is GEKD. A (R)-pantoate-binding site is contributed by Gln-155. ATP contacts are provided by residues Ile-178 and 186–189; that span reads LSSR.

It belongs to the pantothenate synthetase family. In terms of assembly, homodimer.

It is found in the cytoplasm. It carries out the reaction (R)-pantoate + beta-alanine + ATP = (R)-pantothenate + AMP + diphosphate + H(+). Its pathway is cofactor biosynthesis; (R)-pantothenate biosynthesis; (R)-pantothenate from (R)-pantoate and beta-alanine: step 1/1. Catalyzes the condensation of pantoate with beta-alanine in an ATP-dependent reaction via a pantoyl-adenylate intermediate. The protein is Pantothenate synthetase of Buchnera aphidicola subsp. Acyrthosiphon pisum (strain Tuc7).